The chain runs to 444 residues: Maltoporin (444 aa).

The signal sequence occupies residues 1 to 24; sequence MITLRKVPLALAIAAGILSAQAGA.

The protein belongs to the porin LamB (TC 1.B.3) family. As to quaternary structure, homotrimer formed of three 18-stranded antiparallel beta-barrels, containing three independent channels.

Its subcellular location is the cell outer membrane. It catalyses the reaction beta-maltose(in) = beta-maltose(out). Its function is as follows. Involved in the transport of maltose and maltodextrins. This chain is Maltoporin, found in Enterobacter sp. (strain 638).